The primary structure comprises 232 residues: Sugar fermentation stimulation protein homolog (232 aa).

It belongs to the SfsA family.

This Magnetococcus marinus (strain ATCC BAA-1437 / JCM 17883 / MC-1) protein is Sugar fermentation stimulation protein homolog.